The primary structure comprises 125 residues: Large ribosomal subunit protein bL12 (125 aa).

Belongs to the bacterial ribosomal protein bL12 family. In terms of assembly, homodimer. Part of the ribosomal stalk of the 50S ribosomal subunit. Forms a multimeric L10(L12)X complex, where L10 forms an elongated spine to which 2 to 4 L12 dimers bind in a sequential fashion. Binds GTP-bound translation factors.

In terms of biological role, forms part of the ribosomal stalk which helps the ribosome interact with GTP-bound translation factors. Is thus essential for accurate translation. The sequence is that of Large ribosomal subunit protein bL12 from Campylobacter lari (strain RM2100 / D67 / ATCC BAA-1060).